A 536-amino-acid polypeptide reads, in one-letter code: ATP synthase subunit alpha, mitochondrial (536 aa).

The transit peptide at 1-27 (MLRQAGTRLLKVPVCGLRPSITLKRGY) directs the protein to the mitochondrion. 197–204 (GDRQTGKT) provides a ligand contact to ATP.

The protein belongs to the ATPase alpha/beta chains family. In terms of assembly, F-type ATPases have 2 components, CF(1) - the catalytic core - and CF(0) - the membrane proton channel. CF(1) has five subunits: alpha(3), beta(3), gamma(1), delta(1), epsilon(1). CF(0) has three main subunits: a, b and c.

The protein localises to the mitochondrion. Its subcellular location is the mitochondrion inner membrane. In terms of biological role, mitochondrial membrane ATP synthase (F(1)F(0) ATP synthase or Complex V) produces ATP from ADP in the presence of a proton gradient across the membrane which is generated by electron transport complexes of the respiratory chain. F-type ATPases consist of two structural domains, F(1) - containing the extramembraneous catalytic core, and F(0) - containing the membrane proton channel, linked together by a central stalk and a peripheral stalk. During catalysis, ATP synthesis in the catalytic domain of F(1) is coupled via a rotary mechanism of the central stalk subunits to proton translocation. Subunits alpha and beta form the catalytic core in F(1). Rotation of the central stalk against the surrounding alpha(3)beta(3) subunits leads to hydrolysis of ATP in three separate catalytic sites on the beta subunits. Subunit alpha does not bear the catalytic high-affinity ATP-binding sites. The polypeptide is ATP synthase subunit alpha, mitochondrial (atp1) (Schizosaccharomyces pombe (strain 972 / ATCC 24843) (Fission yeast)).